The primary structure comprises 266 residues: Glutathione S-transferase AN1595 (266 aa).

Residues 43–123 form the GST N-terminal domain; it reads SFGKLYTYKR…HVTNEDSTTT (81 aa). Positions 93, 107, 108, and 143 each coordinate glutathione. Lysine 93 lines the substrate pocket. The 132-residue stretch at 128–259 folds into the GST C-terminal domain; that stretch reads SSLDFVQIIR…VEEGLPNAPP (132 aa).

Belongs to the GST superfamily.

Its pathway is secondary metabolite biosynthesis; terpenoid biosynthesis. Glutathione S-transferase; part of the gene cluster that mediates the biosynthesis of the diterpene ent-pimara-8(14),15-diene (PD). Within the cluster, the HMG-CoA reductase AN1593 functions in the mevalonate pathway, which produces isoprenoid precursors. The geranylgeranyl pyrophosphate (GGPP) synthase AN1592 is needed in the formation of GGPP, the precursor for diterpenes. Lastly, the pimaradiene synthase pbcA performs the 2 cyclization steps that convert GGPP to ent-pimara-8(14),15-diene. The putative roles of the remaining cluster enzymes in ent-pimara-8(14),15-diene biosynthesis is unclear. The cytochrome P450 monooxygenase AN1598, the glutathione S-transferase AN1595, the oxidoreductases AN1596 and AN1597 probably function as decorative enzymes. It is possible that in biological conditions the compound is oxidized to ent-pimara-8(14),15-dien-19-oic acid, which is a bioactive diterpene compound predominant in many plant extracts. This is Glutathione S-transferase AN1595 from Emericella nidulans (strain FGSC A4 / ATCC 38163 / CBS 112.46 / NRRL 194 / M139) (Aspergillus nidulans).